A 534-amino-acid chain; its full sequence is Pentatricopeptide repeat-containing protein At2g20540 (534 aa).

PPR repeat units lie at residues 41–71 (SSFM…VSNP), 72–106 (NVFL…SFEL), 108–142 (DRFT…GPRF), 143–173 (HVVT…MYER), 174–208 (DVIS…TIVS), 209–239 (WTAM…GIEP), 240–274 (DEIS…GFLK), 275–305 (QTGV…MEGK), 306–340 (DVIS…KVKP), 341–371 (NGIT…MRQD), and 377–407 (KIEH…MPMK). Positions 412 to 487 (IWGSLLSSCR…TPGGSLIEVN (76 aa)) are type E motif. The interval 488–518 (NIVQEFVSGDNSKPFWTEISIVLQLFTSHQD) is type E(+) motif.

This sequence belongs to the PPR family. PCMP-E subfamily.

The sequence is that of Pentatricopeptide repeat-containing protein At2g20540 (PCMP-E78) from Arabidopsis thaliana (Mouse-ear cress).